The primary structure comprises 100 residues: Small ribosomal subunit protein bS6 (100 aa).

This sequence belongs to the bacterial ribosomal protein bS6 family.

Functionally, binds together with bS18 to 16S ribosomal RNA. This is Small ribosomal subunit protein bS6 from Tropheryma whipplei (strain Twist) (Whipple's bacillus).